An 81-amino-acid polypeptide reads, in one-letter code: ATP synthase subunit c, chloroplastic (81 aa).

Helical transmembrane passes span 3-23 (AIVS…AAIG) and 57-77 (LAFM…LLFA).

It belongs to the ATPase C chain family. F-type ATPases have 2 components, F(1) - the catalytic core - and F(0) - the membrane proton channel. F(1) has five subunits: alpha(3), beta(3), gamma(1), delta(1), epsilon(1). F(0) has four main subunits: a(1), b(1), b'(1) and c(10-14). The alpha and beta chains form an alternating ring which encloses part of the gamma chain. F(1) is attached to F(0) by a central stalk formed by the gamma and epsilon chains, while a peripheral stalk is formed by the delta, b and b' chains.

Its subcellular location is the plastid. It localises to the chloroplast thylakoid membrane. In terms of biological role, f(1)F(0) ATP synthase produces ATP from ADP in the presence of a proton or sodium gradient. F-type ATPases consist of two structural domains, F(1) containing the extramembraneous catalytic core and F(0) containing the membrane proton channel, linked together by a central stalk and a peripheral stalk. During catalysis, ATP synthesis in the catalytic domain of F(1) is coupled via a rotary mechanism of the central stalk subunits to proton translocation. Key component of the F(0) channel; it plays a direct role in translocation across the membrane. A homomeric c-ring of between 10-14 subunits forms the central stalk rotor element with the F(1) delta and epsilon subunits. This chain is ATP synthase subunit c, chloroplastic, found in Cyanidioschyzon merolae (strain NIES-3377 / 10D) (Unicellular red alga).